Consider the following 402-residue polypeptide: NADH-quinone oxidoreductase subunit D (402 aa).

Belongs to the complex I 49 kDa subunit family. As to quaternary structure, NDH-1 is composed of 14 different subunits. Subunits NuoB, C, D, E, F, and G constitute the peripheral sector of the complex.

Its subcellular location is the cell inner membrane. It carries out the reaction a quinone + NADH + 5 H(+)(in) = a quinol + NAD(+) + 4 H(+)(out). Its function is as follows. NDH-1 shuttles electrons from NADH, via FMN and iron-sulfur (Fe-S) centers, to quinones in the respiratory chain. The immediate electron acceptor for the enzyme in this species is believed to be ubiquinone. Couples the redox reaction to proton translocation (for every two electrons transferred, four hydrogen ions are translocated across the cytoplasmic membrane), and thus conserves the redox energy in a proton gradient. The polypeptide is NADH-quinone oxidoreductase subunit D (Nitrobacter winogradskyi (strain ATCC 25391 / DSM 10237 / CIP 104748 / NCIMB 11846 / Nb-255)).